A 144-amino-acid polypeptide reads, in one-letter code: Large ribosomal subunit protein uL15 (144 aa).

Residues 1 to 48 (MRLNTLSPAAGSKSAAKRVGRGIGSGTGKTCGRGHKGQKSRSGGGVRI) are disordered. The segment covering 21-31 (RGIGSGTGKTC) has biased composition (gly residues).

This sequence belongs to the universal ribosomal protein uL15 family. In terms of assembly, part of the 50S ribosomal subunit.

Binds to the 23S rRNA. The polypeptide is Large ribosomal subunit protein uL15 (Shewanella woodyi (strain ATCC 51908 / MS32)).